The chain runs to 340 residues: Lipopolysaccharide heptosyltransferase 3 (340 aa).

The protein belongs to the glycosyltransferase 9 family.

The enzyme catalyses an L-alpha-D-Hep-(1-&gt;3)-4-O-phospho-L-alpha-D-Hep-(1-&gt;5)-[alpha-Kdo-(2-&gt;4)]-alpha-Kdo-(2-&gt;6)-lipid A + ADP-L-glycero-beta-D-manno-heptose = an L-alpha-D-Hep-(1-&gt;7)-L-alpha-D-Hep-(1-&gt;3)-4-O-phospho-L-alpha-D-Hep-(1-&gt;5)-[alpha-Kdo-(2-&gt;4)]-alpha-Kdo-(2-&gt;6)-lipid A + ADP + H(+). It carries out the reaction L-alpha-D-Hep-(1-&gt;3)-4-O-phospho-L-alpha-D-Hep-(1-&gt;5)-[alpha-Kdo-(2-&gt;4)]-alpha-Kdo-(2-&gt;6)-lipid A (E. coli) + ADP-L-glycero-beta-D-manno-heptose = L-alpha-D-Hep-(1-&gt;7)-L-alpha-D-Hep-(1-&gt;3)-4-O-phospho-L-alpha-D-Hep-(1-&gt;5)-[alpha-Kdo-(2-&gt;4)]-alpha-Kdo-(2-&gt;6)-lipid A (E. coli) + ADP + H(+). It functions in the pathway bacterial outer membrane biogenesis; LPS core biosynthesis. In terms of biological role, glycosyltransferase involved in the biosynthesis of the core oligosaccharide region of lipopolysaccharide (LPS). Catalyzes the addition of the third heptose unit (HepIII) to the second heptose unit (HepII) of the phospho-Hep2-Kdo2-lipid A module. The transfer of HepIII seems to be a prerequisite to the phosphorylation of the second heptose unit. The protein is Lipopolysaccharide heptosyltransferase 3 of Escherichia coli.